A 438-amino-acid chain; its full sequence is uncharacterized protein (438 aa).

12 helical membrane-spanning segments follow: residues 22–42 (VSPI…GGFG), 59–79 (SAAL…AGLF), 89–109 (IVKG…MLIA), 137–157 (MVMA…TPWG), 174–194 (FFVP…FLAF), 237–257 (LIYL…LGTK), 258–278 (HPSV…YPNV), 292–312 (AITV…LSGT), 330–350 (MGGF…FVLS), 356–376 (FGMV…PVEI), 380–400 (SIMG…VLLV), and 418–438 (AVIT…ITIL).

This sequence belongs to the CitM (TC 2.A.11) transporter family.

It localises to the cell membrane. Its function is as follows. Transports the free citrate anion. This is an uncharacterized protein from Bacillus subtilis (strain 168).